Reading from the N-terminus, the 395-residue chain is Elongation factor Tu (395 aa).

Residues 10 to 204 (KPHLNIGTIG…AVDTWIELPE (195 aa)) form the tr-type G domain. Positions 19-26 (GHVDHGKT) are G1. 19-26 (GHVDHGKT) is a GTP binding site. Thr26 contributes to the Mg(2+) binding site. The segment at 60-64 (GITIN) is G2. The segment at 81 to 84 (DCPG) is G3. Residues 81–85 (DCPGH) and 136–139 (NKVD) each bind GTP. The tract at residues 136-139 (NKVD) is G4. Residues 174–176 (SAL) are G5.

This sequence belongs to the TRAFAC class translation factor GTPase superfamily. Classic translation factor GTPase family. EF-Tu/EF-1A subfamily. Monomer.

The protein resides in the cytoplasm. The catalysed reaction is GTP + H2O = GDP + phosphate + H(+). Functionally, GTP hydrolase that promotes the GTP-dependent binding of aminoacyl-tRNA to the A-site of ribosomes during protein biosynthesis. The protein is Elongation factor Tu of Christiangramia forsetii (strain DSM 17595 / CGMCC 1.15422 / KT0803) (Gramella forsetii).